The chain runs to 184 residues: Probable RNA 2'-phosphotransferase (184 aa).

It belongs to the KptA/TPT1 family.

Its function is as follows. Removes the 2'-phosphate from RNA via an intermediate in which the phosphate is ADP-ribosylated by NAD followed by a presumed transesterification to release the RNA and generate ADP-ribose 1''-2''-cyclic phosphate (APPR&gt;P). May function as an ADP-ribosylase. The polypeptide is Probable RNA 2'-phosphotransferase (Rhizobium leguminosarum bv. trifolii (strain WSM2304)).